We begin with the raw amino-acid sequence, 421 residues long: Replication factor C large subunit (421 aa).

63–70 (GPPGIGKT) lines the ATP pocket.

Belongs to the activator 1 small subunits family. RfcL subfamily. As to quaternary structure, heteromultimer composed of small subunits (RfcS) and large subunits (RfcL).

Its function is as follows. Part of the RFC clamp loader complex which loads the PCNA sliding clamp onto DNA. This is Replication factor C large subunit from Pyrobaculum calidifontis (strain DSM 21063 / JCM 11548 / VA1).